Reading from the N-terminus, the 741-residue chain is Linoleate 9S-lipoxygenase (741 aa).

The 53-residue stretch at 1-53 (IPGAFYIKNFMQVEFYLKSLTLEDIPNHGTIHFICNSWIYNSKVYKSDRIFFA) folds into the PLAT domain. The 686-residue stretch at 56–741 (TYLPSETPAP…SEEGLTFRGI (686 aa)) folds into the Lipoxygenase domain. Positions 108–144 (ALARPVLGGSTLPYPRRGRTGRPKTKKDPNSEKPSDF) are disordered. A compositionally biased stretch (basic residues) spans 123 to 132 (RRGRTGRPKT). The span at 133–144 (KKDPNSEKPSDF) shows a compositional bias: basic and acidic residues. His-407, His-412, His-598, and Asn-602 together coordinate Fe cation.

This sequence belongs to the lipoxygenase family. Monomer. Requires Fe cation as cofactor.

The protein resides in the cytoplasm. It catalyses the reaction (9Z,12Z)-octadecadienoate + O2 = (9S)-hydroperoxy-(10E,12Z)-octadecadienoate. The catalysed reaction is (9Z,12Z)-octadecadienoate + O2 = (13S)-hydroperoxy-(9Z,11E)-octadecadienoate. It carries out the reaction (9Z,12Z,15Z)-octadecatrienoate + O2 = (13S)-hydroperoxy-(9Z,11E,15Z)-octadecatrienoate. It participates in lipid metabolism; oxylipin biosynthesis. Its function is as follows. Plant lipoxygenase may be involved in a number of diverse aspects of plant physiology including growth and development, pest resistance, and senescence or responses to wounding. It catalyzes the hydroperoxidation of lipids containing a cis,cis-1,4-pentadiene structure. This is Linoleate 9S-lipoxygenase from Phaseolus vulgaris (Kidney bean).